Here is a 418-residue protein sequence, read N- to C-terminus: Cell division protein FtsZ (418 aa).

GTP contacts are provided by residues Gly27–Asn31, Gly114–Gly116, Glu145, Lys149, and Asp193. The interval Lys386–Leu418 is disordered.

This sequence belongs to the FtsZ family. In terms of assembly, homodimer. Polymerizes to form a dynamic ring structure in a strictly GTP-dependent manner. Interacts directly with several other division proteins.

Its subcellular location is the cytoplasm. Essential cell division protein that forms a contractile ring structure (Z ring) at the future cell division site. The regulation of the ring assembly controls the timing and the location of cell division. One of the functions of the FtsZ ring is to recruit other cell division proteins to the septum to produce a new cell wall between the dividing cells. Binds GTP and shows GTPase activity. The sequence is that of Cell division protein FtsZ from Treponema pallidum (strain Nichols).